The primary structure comprises 237 residues: DNA repair protein RecO (237 aa).

It belongs to the RecO family.

Its function is as follows. Involved in DNA repair and RecF pathway recombination. This is DNA repair protein RecO from Rickettsia africae (strain ESF-5).